A 474-amino-acid chain; its full sequence is 6-phospho-beta-galactosidase (474 aa).

Residues glutamine 19, histidine 116, asparagine 159, glutamate 160, and asparagine 297 each contribute to the D-galactose 6-phosphate site. Glutamate 160 (proton donor) is an active-site residue. The active-site Nucleophile is glutamate 375. Residues serine 433, tryptophan 434, lysine 440, and tyrosine 442 each contribute to the D-galactose 6-phosphate site.

The protein belongs to the glycosyl hydrolase 1 family.

It carries out the reaction a 6-phospho-beta-D-galactoside + H2O = D-galactose 6-phosphate + an alcohol. It functions in the pathway carbohydrate metabolism; lactose degradation; D-galactose 6-phosphate and beta-D-glucose from lactose 6-phosphate: step 1/1. The protein is 6-phospho-beta-galactosidase of Lacticaseibacillus rhamnosus (Lactobacillus rhamnosus).